The chain runs to 180 residues: UPF0227 protein VV2369 (180 aa).

Belongs to the UPF0227 family.

The polypeptide is UPF0227 protein VV2369 (Vibrio vulnificus (strain YJ016)).